A 393-amino-acid chain; its full sequence is ATP phosphoribosyltransferase regulatory subunit (393 aa).

It belongs to the class-II aminoacyl-tRNA synthetase family. HisZ subfamily. Heteromultimer composed of HisG and HisZ subunits.

The protein localises to the cytoplasm. Its pathway is amino-acid biosynthesis; L-histidine biosynthesis; L-histidine from 5-phospho-alpha-D-ribose 1-diphosphate: step 1/9. In terms of biological role, required for the first step of histidine biosynthesis. May allow the feedback regulation of ATP phosphoribosyltransferase activity by histidine. This Synechococcus sp. (strain RCC307) protein is ATP phosphoribosyltransferase regulatory subunit.